The sequence spans 412 residues: Transcription factor IIIA (412 aa).

Residues 1–20 (MSESDETKSISSLISSSSSS) form a disordered region. Residues 9–20 (SISSLISSSSSS) are compositionally biased toward low complexity. C2H2-type zinc fingers lie at residues 25–49 (YICT…LRTH), 55–79 (YKCT…IVSH), 85–107 (FHCS…EITH), 111–136 (FKCT…LSVH), 140–162 (LTCK…KLKH), 169–194 (YQCD…KQSH), and 197–219 (LKCP…MLSH). A C2H2-type 8; degenerate zinc finger spans residues 228-252 (WTCDYCDVGKFAKKNELVEHYNIFH). A disordered region spans residues 285–316 (LETEKLKVEEDEEDEEDSLDEKRSDVRSDSMS). Over residues 293–303 (EEDEEDEEDSL) the composition is skewed to acidic residues. The C2H2-type 9 zinc-finger motif lies at 345 to 369 (INCPKNNCDRMFSREYDLRRHLKWH).

The protein resides in the nucleus. Functionally, transcription factor required for transcription of 5S rRNA by RNA polymerase III. The polypeptide is Transcription factor IIIA (PZF1) (Candida albicans (strain SC5314 / ATCC MYA-2876) (Yeast)).